A 208-amino-acid polypeptide reads, in one-letter code: Small ribosomal subunit protein eS8 (208 aa).

A disordered region spans residues 1–27 (MGISRDNWHKRRKTGGKRKPYHKKRKY). G2 carries the N-myristoyl glycine lipid modification. Over residues 8–26 (WHKRRKTGGKRKPYHKKRK) the composition is skewed to basic residues. 2 positions are modified to N6-acetyllysine: K37 and K128. T130 bears the Phosphothreonine mark. At S160 the chain carries Phosphoserine. Residues K170 and K193 each participate in a glycyl lysine isopeptide (Lys-Gly) (interchain with G-Cter in SUMO2) cross-link.

Belongs to the eukaryotic ribosomal protein eS8 family. In terms of assembly, component of the small ribosomal subunit. Identified in a IGF2BP1-dependent mRNP granule complex containing untranslated mRNAs. Part of the small subunit (SSU) processome, composed of more than 70 proteins and the RNA chaperone small nucleolar RNA (snoRNA) U3.

Its subcellular location is the cytoplasm. The protein localises to the membrane. It is found in the nucleus. It localises to the nucleolus. Component of the small ribosomal subunit. The ribosome is a large ribonucleoprotein complex responsible for the synthesis of proteins in the cell. Part of the small subunit (SSU) processome, first precursor of the small eukaryotic ribosomal subunit. During the assembly of the SSU processome in the nucleolus, many ribosome biogenesis factors, an RNA chaperone and ribosomal proteins associate with the nascent pre-rRNA and work in concert to generate RNA folding, modifications, rearrangements and cleavage as well as targeted degradation of pre-ribosomal RNA by the RNA exosome. This Oryctolagus cuniculus (Rabbit) protein is Small ribosomal subunit protein eS8 (RPS8).